The sequence spans 187 residues: Elongation factor P (187 aa).

The protein belongs to the elongation factor P family.

It is found in the cytoplasm. It functions in the pathway protein biosynthesis; polypeptide chain elongation. Functionally, involved in peptide bond synthesis. Stimulates efficient translation and peptide-bond synthesis on native or reconstituted 70S ribosomes in vitro. Probably functions indirectly by altering the affinity of the ribosome for aminoacyl-tRNA, thus increasing their reactivity as acceptors for peptidyl transferase. The chain is Elongation factor P from Mycobacterium marinum (strain ATCC BAA-535 / M).